Reading from the N-terminus, the 337-residue chain is Ketol-acid reductoisomerase (NADP(+)) (337 aa).

The KARI N-terminal Rossmann domain occupies Met-1–Thr-183. Residues Tyr-26–Gln-29, Arg-49, Ser-52, Ser-54, and Asp-84–Gln-87 contribute to the NADP(+) site. His-109 is a catalytic residue. NADP(+) is bound at residue Gly-135. A KARI C-terminal knotted domain is found at Thr-184 to Val-329. Mg(2+)-binding residues include Asp-192, Glu-196, Glu-228, and Glu-232. Ser-253 is a binding site for substrate.

Belongs to the ketol-acid reductoisomerase family. Requires Mg(2+) as cofactor.

The enzyme catalyses (2R)-2,3-dihydroxy-3-methylbutanoate + NADP(+) = (2S)-2-acetolactate + NADPH + H(+). It carries out the reaction (2R,3R)-2,3-dihydroxy-3-methylpentanoate + NADP(+) = (S)-2-ethyl-2-hydroxy-3-oxobutanoate + NADPH + H(+). It functions in the pathway amino-acid biosynthesis; L-isoleucine biosynthesis; L-isoleucine from 2-oxobutanoate: step 2/4. Its pathway is amino-acid biosynthesis; L-valine biosynthesis; L-valine from pyruvate: step 2/4. Involved in the biosynthesis of branched-chain amino acids (BCAA). Catalyzes an alkyl-migration followed by a ketol-acid reduction of (S)-2-acetolactate (S2AL) to yield (R)-2,3-dihydroxy-isovalerate. In the isomerase reaction, S2AL is rearranged via a Mg-dependent methyl migration to produce 3-hydroxy-3-methyl-2-ketobutyrate (HMKB). In the reductase reaction, this 2-ketoacid undergoes a metal-dependent reduction by NADPH to yield (R)-2,3-dihydroxy-isovalerate. In Corynebacterium aurimucosum (strain ATCC 700975 / DSM 44827 / CIP 107346 / CN-1) (Corynebacterium nigricans), this protein is Ketol-acid reductoisomerase (NADP(+)).